A 299-amino-acid chain; its full sequence is Sodium/potassium-transporting ATPase subunit beta-2 (299 aa).

Residues 1 to 36 (MAALTQKKTCSQMMEEWKEFMWNPRTREFMGRTGSS) lie on the Cytoplasmic side of the membrane. A helical; Signal-anchor for type II membrane protein transmembrane segment spans residues 37 to 57 (WALILLFYVVFYAFLTAVFSL). Over 58–299 (SLWVMLQTID…VIFTMKIDRL (242 aa)) the chain is Extracellular. N-linked (GlcNAc...) asparagine glycosylation is found at Asn101 and Asn119. 2 disulfides stabilise this stretch: Cys130-Cys152 and Cys162-Cys178. N-linked (GlcNAc...) asparagine glycans are attached at residues Asn199, Asn226, Asn247, and Asn259. Cys206 and Cys270 are disulfide-bonded.

Belongs to the X(+)/potassium ATPases subunit beta family. As to quaternary structure, the sodium/potassium-transporting ATPase is composed of a catalytic alpha subunit, an auxiliary non-catalytic beta subunit and an additional regulatory subunit. Expressed at a high level in bladder epithelial cells and eye and at a trace level in kidney; it is not detectable in significant amounts in the stomach, colon and small intestine.

It localises to the cell membrane. This is the non-catalytic component of the active enzyme, which catalyzes the hydrolysis of ATP coupled with the exchange of Na(+) and K(+) ions across the plasma membrane. The exact function of this glycoprotein is not known. Some specific sequence of the beta subunit can modulate the activation of the Na,K-pump by extracellular potassium ions. The protein is Sodium/potassium-transporting ATPase subunit beta-2 of Rhinella marina (Cane toad).